The sequence spans 291 residues: Protease HtpX homolog (291 aa).

2 helical membrane passes run 4-24 (VILFLLTNFAVMLVLSVTARI) and 38-58 (MGMLLVFAALIGFGGSFISLL). Residue H144 participates in Zn(2+) binding. The active site involves E145. Residue H148 participates in Zn(2+) binding. The next 2 membrane-spanning stretches (helical) occupy residues 159–179 (LIQGVLNTFVIFLSRIIAYAV) and 199–219 (ISSIACEILFGILASIVVMFF). Position 224 (E224) interacts with Zn(2+).

It belongs to the peptidase M48B family. It depends on Zn(2+) as a cofactor.

Its subcellular location is the cell inner membrane. This chain is Protease HtpX homolog, found in Pelodictyon phaeoclathratiforme (strain DSM 5477 / BU-1).